The sequence spans 229 residues: Uracil-DNA glycosylase (229 aa).

The active-site Proton acceptor is Asp64.

This sequence belongs to the uracil-DNA glycosylase (UDG) superfamily. UNG family.

It localises to the cytoplasm. It catalyses the reaction Hydrolyzes single-stranded DNA or mismatched double-stranded DNA and polynucleotides, releasing free uracil.. In terms of biological role, excises uracil residues from the DNA which can arise as a result of misincorporation of dUMP residues by DNA polymerase or due to deamination of cytosine. In Klebsiella pneumoniae subsp. pneumoniae (strain ATCC 700721 / MGH 78578), this protein is Uracil-DNA glycosylase.